Here is a 117-residue protein sequence, read N- to C-terminus: Anti-adapter protein IraM (117 aa).

The protein belongs to the IraM/RssC family.

Its subcellular location is the cytoplasm. Involved in the stabilization of the sigma stress factor RpoS. This chain is Anti-adapter protein IraM, found in Klebsiella pneumoniae (strain 342).